A 178-amino-acid chain; its full sequence is ATP synthase subunit delta (178 aa).

The protein belongs to the ATPase delta chain family. In terms of assembly, F-type ATPases have 2 components, F(1) - the catalytic core - and F(0) - the membrane proton channel. F(1) has five subunits: alpha(3), beta(3), gamma(1), delta(1), epsilon(1). F(0) has three main subunits: a(1), b(2) and c(10-14). The alpha and beta chains form an alternating ring which encloses part of the gamma chain. F(1) is attached to F(0) by a central stalk formed by the gamma and epsilon chains, while a peripheral stalk is formed by the delta and b chains.

Its subcellular location is the cell inner membrane. In terms of biological role, f(1)F(0) ATP synthase produces ATP from ADP in the presence of a proton or sodium gradient. F-type ATPases consist of two structural domains, F(1) containing the extramembraneous catalytic core and F(0) containing the membrane proton channel, linked together by a central stalk and a peripheral stalk. During catalysis, ATP synthesis in the catalytic domain of F(1) is coupled via a rotary mechanism of the central stalk subunits to proton translocation. Its function is as follows. This protein is part of the stalk that links CF(0) to CF(1). It either transmits conformational changes from CF(0) to CF(1) or is implicated in proton conduction. This chain is ATP synthase subunit delta, found in Pseudomonas syringae pv. tomato (strain ATCC BAA-871 / DC3000).